The sequence spans 241 residues: ATP synthase subunit a (241 aa).

5 helical membrane passes run 21–41 (LASILMVIITSLIVLVIAIAC), 84–104 (VTLILFIFVGNMLGLPFAIVI), 116–136 (DATVTLTLATMVILLTHYYGI), 183–203 (ILIGLLSSLIIGHAAWGWIIG), and 207–227 (LIAWQAFSIFIGTIQAYIFIM).

It belongs to the ATPase A chain family. F-type ATPases have 2 components, CF(1) - the catalytic core - and CF(0) - the membrane proton channel. CF(1) has five subunits: alpha(3), beta(3), gamma(1), delta(1), epsilon(1). CF(0) has three main subunits: a(1), b(2) and c(9-12). The alpha and beta chains form an alternating ring which encloses part of the gamma chain. CF(1) is attached to CF(0) by a central stalk formed by the gamma and epsilon chains, while a peripheral stalk is formed by the delta and b chains.

The protein localises to the cell membrane. Its function is as follows. Key component of the proton channel; it plays a direct role in the translocation of protons across the membrane. The chain is ATP synthase subunit a from Staphylococcus carnosus (strain TM300).